We begin with the raw amino-acid sequence, 781 residues long: Transcription factor Sp3 (781 aa).

Basic and acidic residues predominate over residues 1 to 12 (MTAPEKPVKQEE). Disordered stretches follow at residues 1 to 53 (MTAP…AAQD) and 65 to 88 (TCSKIGPPSPGDDEEEAAAAAGAP). A compositionally biased stretch (gly residues) spans 20 to 31 (SGGGGGGGGGHG). Low complexity predominate over residues 32–53 (EYLQQQQQHGNGAVAAAAAAQD). S73 carries the phosphoserine modification. Residue K120 forms a Glycyl lysine isopeptide (Lys-Gly) (interchain with G-Cter in SUMO) linkage. The interval 138 to 237 (QYVLPLQNLQ…IPQTGQVQVQ (100 aa)) is transactivation domain (Gln-rich). Positions 301 to 338 (QAMDSSDNSERTGERVSPDINETNTDTDLFVPTSSSSQ) are disordered. Residues 308–317 (NSERTGERVS) are compositionally biased toward basic and acidic residues. Residues 320 to 338 (INETNTDTDLFVPTSSSSQ) are compositionally biased toward polar residues. Residues 350 to 499 (QQNTNSLTTS…TPVQTLTLGQ (150 aa)) form a transactivation domain (Gln-rich) region. Positions 461-469 (VTWQTFQVQ) match the 9aaTAD motif. Residues 534–620 (IQLHPGENAD…RGTNLGKKKQ (87 aa)) are repressor domain. At K551 the chain carries N6-acetyllysine; alternate. K551 is covalently cross-linked (Glycyl lysine isopeptide (Lys-Gly) (interchain with G-Cter in SUMO); alternate). K551 participates in a covalent cross-link: Glycyl lysine isopeptide (Lys-Gly) (interchain with G-Cter in SUMO1); alternate. A Glycyl lysine isopeptide (Lys-Gly) (interchain with G-Cter in SUMO2); alternate cross-link involves residue K551. Phosphoserine is present on residues S563 and S566. K593 participates in a covalent cross-link: Glycyl lysine isopeptide (Lys-Gly) (interchain with G-Cter in SUMO2). A C2H2-type 1 zinc finger spans residues 621–645 (HICHIPGCGKVYGKTSHLRAHLRWH). S646 is subject to Phosphoserine. 2 C2H2-type zinc fingers span residues 651 to 675 (FVCNWMYCGKRFTRSDELQRHRRTH) and 681 to 703 (FVCPECSKRFMRSDHLAKHIKTH).

Belongs to the Sp1 C2H2-type zinc-finger protein family. Interacts with HLTF; the interaction may be required for basal transcriptional activity of HLTF. Interacts with HDAC1; the interaction deacetylates SP3 and regulates its transcriptional activity. Interacts with HDAC2 (preferably the CK2-phosphorylated form); the interaction deacetylates SP3 and regulates its transcriptional activity. Interacts with MEIS2 isoform 4 and PBX1 isoform PBX1a. In terms of processing, not glycosylated. Post-translationally, acetylated by histone acetyltransferase p300, deacetylated by HDACs. Acetylation/deacetylation states regulate transcriptional activity. Acetylation appears to activate transcription. Alternate sumoylation and acetylation at Lys-551 also control transcriptional activity. Ceramides can also regulate acetylation/deacetylation events through altering the interaction of HDAC with SP3. In vitro, C(18)-ceramides, but not C(16)-ceramides, increase the interaction of HDAC1 with SP3 and enhance the deacetylation of SP3 and the subsequent repression of the TERT promoter. Sumoylated on all isoforms. Sumoylated on 2 sites in longer isoforms with Lys-551 being the major site. Sumoylation at this site promotes nuclear localization to the nuclear periphery, nuclear dots and PML nuclear bodies. Sumoylation on Lys-551 represses the transactivation activity, except for the largest isoform, L-Sp3, which has little effect on transactivation. Alternate sumoylation and acetylation at Lys-551 also control transcriptional activity. As to expression, ubiquitously expressed.

The protein localises to the nucleus. Its subcellular location is the PML body. In terms of biological role, transcriptional factor that can act as an activator or repressor depending on isoform and/or post-translational modifications. Binds to GT and GC boxes promoter elements. Competes with SP1 for the GC-box promoters. Weak activator of transcription but can activate a number of genes involved in different processes such as cell-cycle regulation, hormone-induction and house-keeping. This Homo sapiens (Human) protein is Transcription factor Sp3 (SP3).